We begin with the raw amino-acid sequence, 312 residues long: Ribosomal RNA small subunit methyltransferase H (312 aa).

S-adenosyl-L-methionine is bound by residues 35–37 (GGH), aspartate 55, phenylalanine 79, aspartate 101, and glutamine 108.

Belongs to the methyltransferase superfamily. RsmH family.

The protein resides in the cytoplasm. It carries out the reaction cytidine(1402) in 16S rRNA + S-adenosyl-L-methionine = N(4)-methylcytidine(1402) in 16S rRNA + S-adenosyl-L-homocysteine + H(+). Specifically methylates the N4 position of cytidine in position 1402 (C1402) of 16S rRNA. The polypeptide is Ribosomal RNA small subunit methyltransferase H (Glaesserella parasuis serovar 5 (strain SH0165) (Haemophilus parasuis)).